Here is a 561-residue protein sequence, read N- to C-terminus: Sesquiterpene synthase TPS2 (561 aa).

The disordered stretch occupies residues 6-26 (ANGHSDVPSTQPPIGKQKKEI). Residues Arg277, Asp314, Asp318, Arg455, and Asp458 each contribute to the (2E,6E)-farnesyl diphosphate site. Asp314 and Asp318 together coordinate Mg(2+). Residues 314–318 (DDTYD) carry the DDXXD motif motif. Mg(2+) is bound by residues Asp458, Ser462, and Glu466.

This sequence belongs to the terpene synthase family. Tpsa subfamily. As to quaternary structure, monomer. It depends on Mg(2+) as a cofactor.

Its subcellular location is the cytoplasm. It carries out the reaction (2E,6E)-farnesyl diphosphate = beta-ylangene + diphosphate. The enzyme catalyses (2E,6E)-farnesyl diphosphate = beta-copaene + diphosphate. It catalyses the reaction (2E,6E)-farnesyl diphosphate = beta-cubebene + diphosphate. The protein operates within secondary metabolite biosynthesis; terpenoid biosynthesis. Functionally, sesquiterpene synthase involved in the biosynthesis of volatile organic compounds. Mediates the conversion of (2E,6E)-farnesyl diphosphate (FPP) into beta-ylangene, beta-copaene and beta-cubebene. Does not use (2E)-geranyl diphosphate (GPP) as substrate. The sequence is that of Sesquiterpene synthase TPS2 from Cananga odorata (Ylang-ylang tree).